A 427-amino-acid polypeptide reads, in one-letter code: Inward rectifier potassium channel 2 (427 aa).

Residues 1–81 (MGSVRTNRYS…IFTTCVDIRW (81 aa)) are Cytoplasmic-facing. An S-nitrosocysteine modification is found at Cys-76. A helical transmembrane segment spans residues 82–106 (RWMLVIFCLAFVLSWLFFGCVFWLI). Residues 107–128 (ALLHGDLDASKEGKACVSEVNS) are Extracellular-facing. Residues 129 to 140 (FTAAFLFSIETQ) constitute an intramembrane region (helical; Pore-forming). Positions 141 to 147 (TTIGYGF) form an intramembrane region, pore-forming. Residues 142 to 147 (TIGYGF) carry the Selectivity filter motif. The Extracellular portion of the chain corresponds to 148–156 (RCVTDECPI). Residues 157 to 178 (AVFMVVFQSIVGCIIDAFIIGA) traverse the membrane as a helical segment. Over 179–427 (VMAKMAKPKK…PRPLRRESEI (249 aa)) the chain is Cytoplasmic. The segment at 181 to 208 (AKMAKPKKRNETLVFSHNAVIAMRDGKL) is polyphosphoinositide (PIP2)-binding. Residues 384–427 (SKEEDDSENGVPESTSTDTPPDIDLHNQASVPLEPRPLRRESEI) form a disordered region. A PDZ-binding motif is present at residues 425 to 427 (SEI).

This sequence belongs to the inward rectifier-type potassium channel (TC 1.A.2.1) family. KCNJ2 subfamily. In terms of assembly, homotetramer. Homomultimeric and heteromultimeric association with KCNJ4/Kir2.3. Can form heteromeric channels with Kir2.6/KCNJ18. Associates, via its PDZ-recognition domain, with a complex containing LIN7A, LIN7B, LIN7C, DLG1, CASK and APBA1. In terms of processing, S-nitrosylation increases the open probability and inward rectifying currents.

It localises to the cell membrane. The protein localises to the sarcolemma. It is found in the T-tubule. It catalyses the reaction K(+)(in) = K(+)(out). Its activity is regulated as follows. Activated by phosphatidylinositol 4,5 biphosphate (PtdIns(4,5)P2). Functionally, inward rectifier potassium channels are characterized by a greater tendency to allow potassium to flow into the cell rather than out of it. Their voltage dependence is regulated by the concentration of extracellular potassium; as external potassium is raised, the voltage range of the channel opening shifts to more positive voltages. The inward rectification is mainly due to the blockage of outward current by internal magnesium. Can be blocked by extracellular barium or cesium. Probably participates in establishing action potential waveform and excitability of neuronal and muscle tissues. This Macaca mulatta (Rhesus macaque) protein is Inward rectifier potassium channel 2 (KCNJ2).